A 638-amino-acid chain; its full sequence is Chaperone protein DnaK (638 aa).

T198 carries the phosphothreonine; by autocatalysis modification. Disordered stretches follow at residues 539–559 (DGLAHSTKKQVEEAGDALASD) and 602–638 (QAKAQGEAEGQAHDAGQEKPADDVVDAEFEEVKDDKK). Positions 611–623 (GQAHDAGQEKPAD) are enriched in basic and acidic residues. Positions 624–638 (DVVDAEFEEVKDDKK) are enriched in acidic residues.

Belongs to the heat shock protein 70 family.

Its function is as follows. Acts as a chaperone. The polypeptide is Chaperone protein DnaK (Shewanella frigidimarina (strain NCIMB 400)).